Here is an 848-residue protein sequence, read N- to C-terminus: Translation initiation factor IF-2 (848 aa).

The segment at 106–150 (TEQQTEAENSTNINLSEQTIKNNSHQSSSNTIETTQEKKQNDDLS) is disordered. Positions 112–139 (AENSTNINLSEQTIKNNSHQSSSNTIET) are enriched in polar residues. Residues 347–517 (PRAPIITVMG…LLLADMLELK (171 aa)) enclose the tr-type G domain. Residues 356 to 363 (GHVDHGKT) form a G1 region. 356 to 363 (GHVDHGKT) provides a ligand contact to GTP. The G2 stretch occupies residues 381–385 (GITQH). Residues 403–406 (DTPG) form a G3 region. GTP is bound by residues 403 to 407 (DTPGH) and 457 to 460 (NKID). The tract at residues 457 to 460 (NKID) is G4. The G5 stretch occupies residues 493 to 495 (SAL).

The protein belongs to the TRAFAC class translation factor GTPase superfamily. Classic translation factor GTPase family. IF-2 subfamily.

It localises to the cytoplasm. Its function is as follows. One of the essential components for the initiation of protein synthesis. Protects formylmethionyl-tRNA from spontaneous hydrolysis and promotes its binding to the 30S ribosomal subunits. Also involved in the hydrolysis of GTP during the formation of the 70S ribosomal complex. In Orientia tsutsugamushi (strain Boryong) (Rickettsia tsutsugamushi), this protein is Translation initiation factor IF-2.